Reading from the N-terminus, the 502-residue chain is MFS-type transporeter aprT (502 aa).

The tract at residues 1-38 (MASPELASHHSDPSDGEGAPFLPGVDDESPESLNSDIP) is disordered. 11 helical membrane-spanning segments follow: residues 45-65 (HGLI…GPMI), 114-136 (IGYR…GLLA), 150-170 (VGFV…NIFP), 175-195 (WFGA…ALFW), 214-234 (FGIA…FVMK), 239-259 (VPLM…NLLP), 302-322 (VAVI…AFLV), 336-356 (ATLL…FILP), 380-400 (VMLL…NTLI), 403-423 (LLLH…ITGL), and 464-484 (LWIG…ALVL). Asn-495 carries N-linked (GlcNAc...) asparagine glycosylation.

This sequence belongs to the major facilitator superfamily.

The protein resides in the cell membrane. MFS-rype transporer; part of the gene cluster that mediates the biosynthesis of the asperipin-2a, a bicyclic peptide that possesses two macrocyclic ether rings consisting of 14- and 17-membered paracyclophans. AprT is likely to be involved in the cellular export of asperipin-2a. This chain is MFS-type transporeter aprT, found in Aspergillus flavus (strain ATCC 200026 / FGSC A1120 / IAM 13836 / NRRL 3357 / JCM 12722 / SRRC 167).